A 361-amino-acid polypeptide reads, in one-letter code: Alternative oxidase, mitochondrial (361 aa).

The helical transmembrane segment at 156–178 (YLVRNVFLESVAGVPGMVAGMLR) threads the bilayer. 3 residues coordinate Fe cation: E164, E203, and H206. The helical transmembrane segment at 218–240 (WFMRLAVLGAQGVFFNAMFLSYL) threads the bilayer. Residues E254, E309, and H312 each coordinate Fe cation. The span at 318-328 (TLGNLDQNSDP) shows a compositional bias: polar residues. The segment at 318–361 (TLGNLDQNSDPNPYASKYDNPNVPHPRKDIKYLKPSGWEREEVM) is disordered. Basic and acidic residues predominate over residues 343–361 (PRKDIKYLKPSGWEREEVM).

The protein belongs to the alternative oxidase family. Requires Fe cation as cofactor.

Its subcellular location is the mitochondrion inner membrane. Its function is as follows. Catalyzes cyanide-resistant oxygen consumption. May increase respiration when the cytochrome respiratory pathway is restricted, or in response to low temperatures. This chain is Alternative oxidase, mitochondrial (AOX1), found in Venturia inaequalis (Apple scab fungus).